Here is a 63-residue protein sequence, read N- to C-terminus: Progonadoliberin-1 (63 aa).

At glutamine 1 the chain carries Pyrrolidone carboxylic acid. Glycine 10 is subject to Glycine amide.

Belongs to the GnRH family. Post-translationally, the precursor is cleaved by ACE, which removes the Gly-Lys-Arg peptide at the C-terminus, leading to mature hormone. The mature form of Gonadoliberin-1 is also cleaved and degraded by ACE.

The protein resides in the secreted. Functionally, stimulates the secretion of gonadotropins; it stimulates the secretion of both luteinizing and follicle-stimulating hormones. The polypeptide is Progonadoliberin-1 (GNRH1) (Mesocricetus auratus (Golden hamster)).